Here is a 483-residue protein sequence, read N- to C-terminus: GTPase Obg (483 aa).

The Obg domain maps to 2-159 (SRFIDRVVLH…RDLVLELKSV (158 aa)). The OBG-type G domain occupies 160–340 (ADVGLLGFPS…LTFALAKMVR (181 aa)). Residues 166 to 173 (GFPSAGKS), 191 to 195 (FTTLV), 212 to 215 (DVPG), 292 to 295 (NKTD), and 321 to 323 (SAV) each bind GTP. 2 residues coordinate Mg(2+): S173 and T193. The OCT domain occupies 358-438 (PVKVKDSSFT…IGDVSFEWEP (81 aa)).

Belongs to the TRAFAC class OBG-HflX-like GTPase superfamily. OBG GTPase family. In terms of assembly, monomer. Requires Mg(2+) as cofactor.

The protein resides in the cytoplasm. An essential GTPase which binds GTP, GDP and possibly (p)ppGpp with moderate affinity, with high nucleotide exchange rates and a fairly low GTP hydrolysis rate. Plays a role in control of the cell cycle, stress response, ribosome biogenesis and in those bacteria that undergo differentiation, in morphogenesis control. In Rhodococcus erythropolis (strain PR4 / NBRC 100887), this protein is GTPase Obg.